The sequence spans 209 residues: Chaperone protein TorD (209 aa).

The protein belongs to the TorD/DmsD family. TorD subfamily.

Its subcellular location is the cytoplasm. Functionally, involved in the biogenesis of TorA. Acts on TorA before the insertion of the molybdenum cofactor and, as a result, probably favors a conformation of the apoenzyme that is competent for acquiring the cofactor. This Salmonella bongori (strain ATCC 43975 / DSM 13772 / NCTC 12419) protein is Chaperone protein TorD.